A 378-amino-acid chain; its full sequence is Beta-1,3-galactosyltransferase pvg3 (378 aa).

At M1–K8 the chain is on the cytoplasmic side. The chain crosses the membrane as a helical; Signal-anchor for type II membrane protein span at residues I9–N29. Residues R30–V378 lie on the Lumenal side of the membrane. N53, N97, N180, and N354 each carry an N-linked (GlcNAc...) asparagine glycan.

Belongs to the glycosyltransferase 31 family.

It is found in the endoplasmic reticulum membrane. It localises to the golgi apparatus. Its subcellular location is the golgi stack membrane. It carries out the reaction 3-O-(beta-D-galactosyl-(1-&gt;4)-beta-D-xylosyl)-L-seryl-[protein] + UDP-alpha-D-galactose = 3-O-(beta-D-galactosyl-(1-&gt;3)-beta-D-galactosyl-(1-&gt;4)-beta-D-xylosyl)-L-seryl-[protein] + UDP + H(+). Involved in cell wall biogenesis. Has a role in the addition of Gal-beta1,3 moeities to galactomannans and their subsequent pyruvylation. Has a role in meiosis. This is Beta-1,3-galactosyltransferase pvg3 (pvg3) from Schizosaccharomyces pombe (strain 972 / ATCC 24843) (Fission yeast).